Consider the following 679-residue polypeptide: Protein hook (679 aa).

Residues 6–123 form the Calponin-homology (CH) domain; the sequence is NEMYYSLLEW…RLLQLVLGCA (118 aa). Coiled coils occupy residues 135-437 and 480-574; these read EIMC…LKCG and QTAL…QEIL.

The protein belongs to the hook family. Homodimer. Interacts with microtubules via its N-terminus.

Its subcellular location is the cytoplasm. It is found in the cytoskeleton. It localises to the endosome. The protein resides in the synapse. Involved in endocytic trafficking by stabilizing organelles of the endocytic pathway. Probably acts as a cytoskeletal linker protein required to tether endosome vesicles to the cytoskeleton. Involved in modulation of endocytosis at stages required for down-regulation of membrane proteins that control synapse size. Not involved in synaptic vesicle recycling. Required in R7 cells for boss endocytosis into multivesicular bodies (MVBs). Has a role in regulating adult longevity. The chain is Protein hook from Drosophila yakuba (Fruit fly).